Here is a 126-residue protein sequence, read N- to C-terminus: Protein ApaG (126 aa).

The ApaG domain maps to 2-126 (SDPRYQIDVS…FRLAVPGALH (125 aa)).

This chain is Protein ApaG, found in Pseudomonas entomophila (strain L48).